Reading from the N-terminus, the 870-residue chain is UvrABC system protein B (870 aa).

A Helicase ATP-binding domain is found at 20-410 (EGVDNNDRTQ…VFAEQVIRPT (391 aa)). Position 33–40 (33–40 (GVTGSGKT)) interacts with ATP. A Beta-hairpin motif is present at residues 86 to 109 (YYDYYQPEAYVPRTDTFIEKESSI). In terms of domain architecture, Helicase C-terminal spans 425–591 (QVDDVVGEIR…SVKSRISDIL (167 aa)). The region spanning 620–655 (KAHLDAMEKQMRDAAANLDFEKAARIRDEIKRLREM) is the UVR domain. 2 disordered regions span residues 671–698 (ESPVSGREKGKHNKGVAKHRTAEEQERF) and 741–870 (AKPS…RPGK). Basic residues predominate over residues 679–689 (KGKHNKGVAKH). Composition is skewed to basic and acidic residues over residues 793–808 (NSLDEMTVRRTEKPVE) and 827–836 (TDVKDRDDSA). Basic residues predominate over residues 858–870 (EKRRPGKTGRPGK).

It belongs to the UvrB family. As to quaternary structure, forms a heterotetramer with UvrA during the search for lesions. Interacts with UvrC in an incision complex.

Its subcellular location is the cytoplasm. Functionally, the UvrABC repair system catalyzes the recognition and processing of DNA lesions. A damage recognition complex composed of 2 UvrA and 2 UvrB subunits scans DNA for abnormalities. Upon binding of the UvrA(2)B(2) complex to a putative damaged site, the DNA wraps around one UvrB monomer. DNA wrap is dependent on ATP binding by UvrB and probably causes local melting of the DNA helix, facilitating insertion of UvrB beta-hairpin between the DNA strands. Then UvrB probes one DNA strand for the presence of a lesion. If a lesion is found the UvrA subunits dissociate and the UvrB-DNA preincision complex is formed. This complex is subsequently bound by UvrC and the second UvrB is released. If no lesion is found, the DNA wraps around the other UvrB subunit that will check the other stand for damage. In Mesorhizobium japonicum (strain LMG 29417 / CECT 9101 / MAFF 303099) (Mesorhizobium loti (strain MAFF 303099)), this protein is UvrABC system protein B.